The following is a 451-amino-acid chain: MDDDSNQKPLFHMALGVLTSLTPPQHHIELVDEHFHDKINYDGDYDMVGITSRTIEATRAYEIADEFRKRGKTVVLGGLHISFNPEEAAAHADCIVVGEADNLWTTLLDDVANNRLKERYDSKDFPPVKAITPLDYARIAKASKRTKVDGTKSIPIYVTRGCPFNCSFCVTPNFTGKQYRVQDPKLLKHQIEEAKKYFFKANGKNSKPWFMLTDENLGINKKKLWESLDLLKECDITFSVFLSINFLEDPTTVKKLVDAGCNFVLAGLESIKQSTLEAYNKGHVNSAEKYSKIIEDCRKAGLNIQGNFLFNPAIDTFEDIDELVQFVKKNHIFMPIFQIITPYPGTQMYHEYRESGLITIEDWEKYNALHLVIKSDRYEPLLFQYKVLKSYVEVYTWKEILLRTLYNPRKLINLVTSIAFKKHLAAQLKAFERNHKMNPAMLSGVKPVMNG.

The B12-binding domain occupies methionine 1–glutamate 118. The Radical SAM core domain occupies valine 148–arginine 377. Positions 162, 166, and 169 each coordinate [4Fe-4S] cluster.

It belongs to the radical SAM superfamily. The cofactor is [4Fe-4S] cluster.

It localises to the cytoplasm. It carries out the reaction 8,12-diethyl-3-vinylbacteriochlorophyllide d + S-adenosyl-L-methionine = 12-ethyl-8-propyl-3-vinylbacteriochlorophyllide d + S-adenosyl-L-homocysteine + H(+). The catalysed reaction is 12-ethyl-8-propyl-3-vinylbacteriochlorophyllide d + S-adenosyl-L-methionine = 12-ethyl-8-isobutyl-3-vinylbacteriochlorophyllide d + S-adenosyl-L-homocysteine + H(+). It participates in porphyrin-containing compound metabolism; bacteriochlorophyll biosynthesis (light-independent). Functionally, involved in the biosynthesis of the major light-harvesting pigment bacteriochlorophyll c (BChlc), which confers a significant competitive advantage to green sulfur bacteria living at limiting red and near-infrared light intensities. BchQ is a methyltransferase that adds two consecutive methyl groups to the ethyl carbon at the C-8(2) position of 8,12-diethyl-3-vinylbacteriochlorophyllide d to yield 12-ethyl-8-isobutyl-3-vinylbacteriochlorophyllide d. The chain is Bacteriochlorophyllide d C-8(2)-methyltransferase from Chlorobaculum tepidum (strain ATCC 49652 / DSM 12025 / NBRC 103806 / TLS) (Chlorobium tepidum).